Here is a 968-residue protein sequence, read N- to C-terminus: Glycine dehydrogenase (decarboxylating) (968 aa).

Lys-713 is modified (N6-(pyridoxal phosphate)lysine).

Belongs to the GcvP family. As to quaternary structure, the glycine cleavage system is composed of four proteins: P, T, L and H. Pyridoxal 5'-phosphate serves as cofactor.

The catalysed reaction is N(6)-[(R)-lipoyl]-L-lysyl-[glycine-cleavage complex H protein] + glycine + H(+) = N(6)-[(R)-S(8)-aminomethyldihydrolipoyl]-L-lysyl-[glycine-cleavage complex H protein] + CO2. In terms of biological role, the glycine cleavage system catalyzes the degradation of glycine. The P protein binds the alpha-amino group of glycine through its pyridoxal phosphate cofactor; CO(2) is released and the remaining methylamine moiety is then transferred to the lipoamide cofactor of the H protein. The protein is Glycine dehydrogenase (decarboxylating) of Variovorax paradoxus (strain S110).